A 304-amino-acid polypeptide reads, in one-letter code: Porphobilinogen deaminase (304 aa).

An S-(dipyrrolylmethanemethyl)cysteine modification is found at C239.

This sequence belongs to the HMBS family. As to quaternary structure, monomer. It depends on dipyrromethane as a cofactor.

The catalysed reaction is 4 porphobilinogen + H2O = hydroxymethylbilane + 4 NH4(+). It functions in the pathway porphyrin-containing compound metabolism; protoporphyrin-IX biosynthesis; coproporphyrinogen-III from 5-aminolevulinate: step 2/4. Tetrapolymerization of the monopyrrole PBG into the hydroxymethylbilane pre-uroporphyrinogen in several discrete steps. This Brucella ovis (strain ATCC 25840 / 63/290 / NCTC 10512) protein is Porphobilinogen deaminase.